The primary structure comprises 193 residues: Recombination protein RecR (193 aa).

A C4-type; degenerate zinc finger spans residues 61–76 (CASCNALSETEVSEIC). Residues 84 to 170 (SQLCMVLHPR…TFTKIAQGVP (87 aa)) enclose the Toprim domain.

This sequence belongs to the RecR family.

May play a role in DNA repair. It seems to be involved in an RecBC-independent recombinational process of DNA repair. It may act with RecF and RecO. The chain is Recombination protein RecR from Helicobacter pylori (strain J99 / ATCC 700824) (Campylobacter pylori J99).